A 54-amino-acid chain; its full sequence is Large ribosomal subunit protein bL33B (54 aa).

The protein belongs to the bacterial ribosomal protein bL33 family.

This Mycobacterium sp. (strain JLS) protein is Large ribosomal subunit protein bL33B.